The sequence spans 584 residues: tRNA-guanine(15) transglycosylase (584 aa).

D95 functions as the Nucleophile in the catalytic mechanism. Substrate-binding residues include D130 and G196. Positions 279, 281, and 284 each coordinate Zn(2+). Residues 507–582 (RMRVVVSEEA…RAVKVRRGIS (76 aa)) form the PUA domain.

It belongs to the archaeosine tRNA-ribosyltransferase family. The cofactor is Zn(2+).

It carries out the reaction guanosine(15) in tRNA + 7-cyano-7-deazaguanine = 7-cyano-7-carbaguanosine(15) in tRNA + guanine. It participates in tRNA modification; archaeosine-tRNA biosynthesis. Exchanges the guanine residue with 7-cyano-7-deazaguanine (preQ0) at position 15 in the dihydrouridine loop (D-loop) of archaeal tRNAs. This chain is tRNA-guanine(15) transglycosylase, found in Pyrococcus abyssi (strain GE5 / Orsay).